The sequence spans 276 residues: Nickel import system permease protein NikC (276 aa).

Transmembrane regions (helical) follow at residues leucine 10–serine 30, leucine 73–phenylalanine 93, phenylalanine 108–phenylalanine 128, isoleucine 186–serine 206, and isoleucine 238–glycine 258. Residues alanine 69–glycine 258 form the ABC transmembrane type-1 domain.

Belongs to the binding-protein-dependent transport system permease family. OppBC subfamily. In terms of assembly, the complex is composed of two ATP-binding proteins (NikD and NikE), two transmembrane proteins (NikB and NikC) and a solute-binding protein (NikA).

Its subcellular location is the cell membrane. In terms of biological role, part of the ABC transporter complex NikABCDE (Opp2) involved in nickel import. Probably responsible for the translocation of the substrate across the membrane. The protein is Nickel import system permease protein NikC of Staphylococcus aureus (strain USA300).